The sequence spans 77 residues: MFNNKGRRNVRNNEVRRNVPVKEGETYTVTIEDMGRGGDGIARVEGFVVFVPETQKGETVNVKITAVKSKFAFAEKI.

Positions 1 to 10 (MFNNKGRRNV) are enriched in basic residues. Positions 1–21 (MFNNKGRRNVRNNEVRRNVPV) are disordered. Residues 11-21 (RNNEVRRNVPV) show a composition bias toward basic and acidic residues. In terms of domain architecture, TRAM spans 20–77 (PVKEGETYTVTIEDMGRGGDGIARVEGFVVFVPETQKGETVNVKITAVKSKFAFAEKI).

This is an uncharacterized protein from Methanocaldococcus jannaschii (strain ATCC 43067 / DSM 2661 / JAL-1 / JCM 10045 / NBRC 100440) (Methanococcus jannaschii).